Here is a 141-residue protein sequence, read N- to C-terminus: Succinate dehydrogenase assembly factor 2, mitochondrial (141 aa).

Belongs to the SDHAF2 family. As to quaternary structure, interacts with the flavoprotein subunit within the SDH catalytic dimer.

It localises to the mitochondrion matrix. Functionally, plays an essential role in the assembly of succinate dehydrogenase (SDH), an enzyme complex (also referred to as respiratory complex II) that is a component of both the tricarboxylic acid (TCA) cycle and the mitochondrial electron transport chain, and which couples the oxidation of succinate to fumarate with the reduction of ubiquinone (coenzyme Q) to ubiquinol. Required for flavinylation (covalent attachment of FAD) of the flavoprotein subunit of the SDH catalytic dimer. This chain is Succinate dehydrogenase assembly factor 2, mitochondrial, found in Dictyostelium discoideum (Social amoeba).